The primary structure comprises 536 residues: Membrane protein insertase YidC (536 aa).

A helical transmembrane segment spans residues 7–27 (IIAVVLSLFVLIGWSYLSEFM). Residues 43–70 (VQQKASEPVAQPVQTASAPAASSFAPTE) form a disordered region. Positions 58-68 (ASAPAASSFAP) are enriched in low complexity. The next 3 helical transmembrane spans lie at 346–366 (GNYG…FWPL), 415–435 (GGCL…QGLL), and 495–515 (IMMF…AGLV).

Belongs to the OXA1/ALB3/YidC family. Type 1 subfamily. Interacts with the Sec translocase complex via SecD. Specifically interacts with transmembrane segments of nascent integral membrane proteins during membrane integration.

The protein localises to the cell inner membrane. Functionally, required for the insertion and/or proper folding and/or complex formation of integral membrane proteins into the membrane. Involved in integration of membrane proteins that insert both dependently and independently of the Sec translocase complex, as well as at least some lipoproteins. Aids folding of multispanning membrane proteins. The polypeptide is Membrane protein insertase YidC (Oleidesulfovibrio alaskensis (strain ATCC BAA-1058 / DSM 17464 / G20) (Desulfovibrio alaskensis)).